An 86-amino-acid chain; its full sequence is Putative membrane protein insertion efficiency factor (86 aa).

The protein belongs to the UPF0161 family.

Its subcellular location is the cell inner membrane. Its function is as follows. Could be involved in insertion of integral membrane proteins into the membrane. The chain is Putative membrane protein insertion efficiency factor from Haemophilus influenzae (strain 86-028NP).